Reading from the N-terminus, the 601-residue chain is uncharacterized protein (601 aa).

A compositionally biased stretch (basic residues) spans 24-35 (RKSNVVLKKNKG). Disordered regions lie at residues 24 to 106 (RKSN…LKLD) and 171 to 219 (YGND…PREE). Residues 54-81 (SQFSSRDNFRTTQTQASSSSEPSDNTNR) show a composition bias toward polar residues. A compositionally biased stretch (basic and acidic residues) spans 92-106 (TPKKEESNAEKLKLD). A phosphoserine mark is found at S236 and S238. The interval 260–283 (RKRKVLSSSSEDDESSSPEDLLKP) is disordered.

Its subcellular location is the nucleus. This is an uncharacterized protein from Schizosaccharomyces pombe (strain 972 / ATCC 24843) (Fission yeast).